Consider the following 124-residue polypeptide: Small ribosomal subunit protein bS16 (124 aa).

Positions 81-90 (LKKRPARNNP) are enriched in basic residues. The disordered stretch occupies residues 81-124 (LKKRPARNNPHKGEPGKKAQERIAAAKQAAEDAAAAAEADSASE). Basic and acidic residues predominate over residues 91 to 101 (HKGEPGKKAQE). A compositionally biased stretch (low complexity) spans 102-124 (RIAAAKQAAEDAAAAAEADSASE).

It belongs to the bacterial ribosomal protein bS16 family.

This chain is Small ribosomal subunit protein bS16, found in Bartonella tribocorum (strain CIP 105476 / IBS 506).